The primary structure comprises 348 residues: Histidinol-phosphate aminotransferase (348 aa).

Lysine 210 bears the N6-(pyridoxal phosphate)lysine mark.

Belongs to the class-II pyridoxal-phosphate-dependent aminotransferase family. Histidinol-phosphate aminotransferase subfamily. Homodimer. Pyridoxal 5'-phosphate serves as cofactor.

It carries out the reaction L-histidinol phosphate + 2-oxoglutarate = 3-(imidazol-4-yl)-2-oxopropyl phosphate + L-glutamate. The protein operates within amino-acid biosynthesis; L-histidine biosynthesis; L-histidine from 5-phospho-alpha-D-ribose 1-diphosphate: step 7/9. The sequence is that of Histidinol-phosphate aminotransferase from Pseudomonas putida (strain W619).